We begin with the raw amino-acid sequence, 720 residues long: Proline-rich receptor-like protein kinase PERK12 (720 aa).

The tract at residues 1–240 (MSDLGESPSS…GNGDGGGGGG (240 aa)) is disordered. Topologically, residues 1–246 (MSDLGESPSS…GGGGGYQGKT (246 aa)) are extracellular. The span at 10–25 (SSPPAPPADTAPPPET) shows a compositional bias: pro residues. The span at 26–35 (PSENSALPPV) shows a compositional bias: low complexity. Pro residues-rich tracts occupy residues 52–84 (LSEPSTPPPDSQLPPLPSILPPLTDSPPPPSDS) and 92–116 (PSPPPPTSNESPSPPEDSETPPAPP). The N-linked (GlcNAc...) asparagine glycan is linked to Asn-117. 2 stretches are compositionally biased toward pro residues: residues 123 to 138 (NPPPSQDLQSPPPSSP) and 147 to 207 (PESP…PPKT). A helical transmembrane segment spans residues 247 to 267 (MVGMAVAGFAIMALIGVVFLV). Residues 268 to 720 (RRKKKRNIDS…ETRPFNNRRF (453 aa)) lie on the Cytoplasmic side of the membrane. The tract at residues 300-349 (QDPGKGYSSGPNGSMYNNSQQQQSSMGNSYGTAGGGYPHHQMQSSGTPDS) is disordered. Residues 311 to 330 (NGSMYNNSQQQQSSMGNSYG) show a composition bias toward low complexity. In terms of domain architecture, Protein kinase spans 371–624 (FARKNILGEG…EVFRMIETAA (254 aa)). ATP contacts are provided by residues 377–385 (LGEGGFGCV) and Lys-399. The residue at position 444 (Tyr-444) is a Phosphotyrosine. Asp-495 functions as the Proton acceptor in the catalytic mechanism. Ser-528 bears the Phosphoserine mark. Thr-529 and Thr-534 each carry phosphothreonine. Tyr-542 is subject to Phosphotyrosine. The tract at residues 698-720 (SAKSSSDFSGNESETRPFNNRRF) is disordered.

The protein belongs to the protein kinase superfamily. Ser/Thr protein kinase family. In terms of tissue distribution, mostly expressed in apical parts, including flower buds, and particularly in anthers. Also present in root hairs.

It localises to the cell membrane. The catalysed reaction is L-seryl-[protein] + ATP = O-phospho-L-seryl-[protein] + ADP + H(+). The enzyme catalyses L-threonyl-[protein] + ATP = O-phospho-L-threonyl-[protein] + ADP + H(+). Regulates the auxin-related MAX (More Axillary Growth) pathway during the shoot branching. The sequence is that of Proline-rich receptor-like protein kinase PERK12 (PERK12) from Arabidopsis thaliana (Mouse-ear cress).